A 266-amino-acid chain; its full sequence is MQLYHHPYSIDSQRVRLALEEKGIDYTSYHVNPITGKHMDPSFFRMNPNAKLPVFRNGSHIILDTIEIIEYLERIAEVSSGIEDATFNREVVEWMRKIREWESKLFTLAHIPDNRRLYVSKFLRMVVIARMAESPDLASAYHRKLREAYDTEDKLKDPGALRRSKDHLLRLLDEVETKLEGTTYLAGNEFSMADVMLIPVLARLSLLDLEEEYISSRKNLAEYWALVRRRPSYKKVIGRYFNGWRKYATLVKTWMFVRVRSLLRKY.

The GST N-terminal domain maps to 1–80 (MQLYHHPYSI…YLERIAEVSS (80 aa)). Glutathione-binding positions include 9–10 (SI), 38–39 (HM), 51–52 (KL), and 64–65 (DT). Positions 120-250 (SKFLRMVVIA…FNGWRKYATL (131 aa)) constitute a GST C-terminal domain.

It belongs to the GST superfamily.

The protein resides in the cell membrane. The catalysed reaction is RX + glutathione = an S-substituted glutathione + a halide anion + H(+). In terms of biological role, may be involved in the conjugation of reduced glutathione to a wide number of exogenous and endogenous hydrophobic electrophiles. In Arabidopsis thaliana (Mouse-ear cress), this protein is Glutathione S-transferase TCHQD (TCHQD).